We begin with the raw amino-acid sequence, 319 residues long: Aspartate carbamoyltransferase catalytic subunit (319 aa).

Carbamoyl phosphate contacts are provided by Arg-65 and Thr-66. Lys-93 contacts L-aspartate. 3 residues coordinate carbamoyl phosphate: Arg-115, His-149, and Gln-152. L-aspartate-binding residues include Arg-182 and Arg-237. Residues Gly-278 and Pro-279 each contribute to the carbamoyl phosphate site.

It belongs to the aspartate/ornithine carbamoyltransferase superfamily. ATCase family. As to quaternary structure, heterododecamer (2C3:3R2) of six catalytic PyrB chains organized as two trimers (C3), and six regulatory PyrI chains organized as three dimers (R2).

It carries out the reaction carbamoyl phosphate + L-aspartate = N-carbamoyl-L-aspartate + phosphate + H(+). It participates in pyrimidine metabolism; UMP biosynthesis via de novo pathway; (S)-dihydroorotate from bicarbonate: step 2/3. Its function is as follows. Catalyzes the condensation of carbamoyl phosphate and aspartate to form carbamoyl aspartate and inorganic phosphate, the committed step in the de novo pyrimidine nucleotide biosynthesis pathway. This is Aspartate carbamoyltransferase catalytic subunit from Janthinobacterium sp. (strain Marseille) (Minibacterium massiliensis).